The chain runs to 271 residues: Autophagy-related protein 5 (271 aa).

A Glycyl lysine isopeptide (Lys-Gly) (interchain with G-Cter in ATG12) cross-link involves residue Lys-145.

Belongs to the ATG5 family. As to quaternary structure, conjugated with ATG12. Interacts with ATG10. The ATG5-ATG12 conjugate forms a complex with several units of ATG16. The ATG12-ATG5 conjugate also associates with ATG3. Post-translationally, conjugated to ATG12; which is essential for autophagy. Conjugation with ATG12 involves ATG7 as an E1-like activating enzyme and ATG10 as an E2-like conjugating enzyme.

Its subcellular location is the preautophagosomal structure membrane. In terms of biological role, involved in cytoplasm to vacuole transport (Cvt) and autophagic vesicle formation. Autophagy is essential for maintenance of amino acid levels and protein synthesis under nitrogen starvation. Required for selective autophagic degradation of the nucleus (nucleophagy). Also required for mitophagy, which eliminates defective or superfluous mitochondria in order to fulfill cellular energy requirements and prevent excess ROS production. Conjugation with ATG12, through a ubiquitin-like conjugating system involving ATG7 as an E1-like activating enzyme and ATG10 as an E2-like conjugating enzyme, is essential for its function. The ATG12-ATG5 conjugate acts as an E3-like enzyme which is required for lipidation of ATG8 and ATG8 association to the vesicle membranes. ATG12-ATG5 rearranges the ATG3 catalytic center and enhances its E2 activity. This chain is Autophagy-related protein 5, found in Kluyveromyces marxianus (strain DMKU3-1042 / BCC 29191 / NBRC 104275) (Yeast).